Here is a 335-residue protein sequence, read N- to C-terminus: Holliday junction branch migration complex subunit RuvB (335 aa).

Residues 1 to 181 (MERIIEIEKM…FGMNFWMQFY (181 aa)) are large ATPase domain (RuvB-L). ATP contacts are provided by residues Leu-20, Arg-21, Gly-62, Lys-65, Thr-66, Thr-67, 128–130 (EDF), Arg-171, Tyr-181, and Arg-218. A Mg(2+)-binding site is contributed by Thr-66. The segment at 182–252 (NIEELSQIIT…QARYALHELG (71 aa)) is small ATPAse domain (RuvB-S). Positions 255–335 (DHGFDDLDLR…LPFEPNATLF (81 aa)) are head domain (RuvB-H). Residues Arg-309 and Arg-314 each contribute to the DNA site.

It belongs to the RuvB family. In terms of assembly, homohexamer. Forms an RuvA(8)-RuvB(12)-Holliday junction (HJ) complex. HJ DNA is sandwiched between 2 RuvA tetramers; dsDNA enters through RuvA and exits via RuvB. An RuvB hexamer assembles on each DNA strand where it exits the tetramer. Each RuvB hexamer is contacted by two RuvA subunits (via domain III) on 2 adjacent RuvB subunits; this complex drives branch migration. In the full resolvosome a probable DNA-RuvA(4)-RuvB(12)-RuvC(2) complex forms which resolves the HJ.

It localises to the cytoplasm. It catalyses the reaction ATP + H2O = ADP + phosphate + H(+). Functionally, the RuvA-RuvB-RuvC complex processes Holliday junction (HJ) DNA during genetic recombination and DNA repair, while the RuvA-RuvB complex plays an important role in the rescue of blocked DNA replication forks via replication fork reversal (RFR). RuvA specifically binds to HJ cruciform DNA, conferring on it an open structure. The RuvB hexamer acts as an ATP-dependent pump, pulling dsDNA into and through the RuvAB complex. RuvB forms 2 homohexamers on either side of HJ DNA bound by 1 or 2 RuvA tetramers; 4 subunits per hexamer contact DNA at a time. Coordinated motions by a converter formed by DNA-disengaged RuvB subunits stimulates ATP hydrolysis and nucleotide exchange. Immobilization of the converter enables RuvB to convert the ATP-contained energy into a lever motion, pulling 2 nucleotides of DNA out of the RuvA tetramer per ATP hydrolyzed, thus driving DNA branch migration. The RuvB motors rotate together with the DNA substrate, which together with the progressing nucleotide cycle form the mechanistic basis for DNA recombination by continuous HJ branch migration. Branch migration allows RuvC to scan DNA until it finds its consensus sequence, where it cleaves and resolves cruciform DNA. This chain is Holliday junction branch migration complex subunit RuvB, found in Wolinella succinogenes (strain ATCC 29543 / DSM 1740 / CCUG 13145 / JCM 31913 / LMG 7466 / NCTC 11488 / FDC 602W) (Vibrio succinogenes).